A 361-amino-acid polypeptide reads, in one-letter code: Aurora kinase B-A (361 aa).

One can recognise a Protein kinase domain in the interval 93–343 (FDIGRPLGKG…LKGVMEHPWV (251 aa)). Residues 99–107 (LGKGKFGNV) and lysine 122 contribute to the ATP site. The active-site Proton acceptor is aspartate 216.

This sequence belongs to the protein kinase superfamily. Ser/Thr protein kinase family. Aurora subfamily. Component of the CPC at least composed of survivin/birc5, incenp, cdca8/borealin and/or cdca9/dasra-A, and aurkb/aurora-B. Interacts directly (via N-terminus and kinase domain) with incenp (via C terminus), and may weakly interact (via N-terminus) with birc5.1 to stabilize the complex. Interacts with mtus1. Mg(2+) is required as a cofactor. In terms of processing, phosphorylated, stimulates kinase activity.

It localises to the nucleus. Its subcellular location is the chromosome. The catalysed reaction is L-seryl-[protein] + ATP = O-phospho-L-seryl-[protein] + ADP + H(+). It carries out the reaction L-threonyl-[protein] + ATP = O-phospho-L-threonyl-[protein] + ADP + H(+). Kinase activity is stimulated by both birc5/survivin-binding and cell-cycle specific phosphorylation. Serine/threonine-protein kinase component of the chromosomal passenger complex (CPC), a complex that acts as a key regulator of mitosis. The CPC complex has essential functions at the centromere in ensuring correct chromosome alignment and segregation and is required for chromatin-induced microtubule stabilization and spindle assembly. Involved in the bipolar attachment of spindle microtubules to kinetochores and is a key regulator for the onset of cytokinesis during mitosis. Required for central/midzone spindle assembly and cleavage furrow formation. Key component of the cytokinesis checkpoint, a process required to delay abscission to prevent both premature resolution of intercellular chromosome bridges and accumulation of DNA damage. Phosphorylates 'Ser-10' of histone H3 during mitosis. The protein is Aurora kinase B-A (aurkb-a) of Xenopus laevis (African clawed frog).